We begin with the raw amino-acid sequence, 199 residues long: Recombination protein RecR (199 aa).

The segment at 56–71 (CAICGNVAEHEQCRIC) adopts a C4-type zinc-finger fold. Residues 79 to 174 (TVLCVVEEPK…RVTRLASGLP (96 aa)) form the Toprim domain.

Belongs to the RecR family.

Its function is as follows. May play a role in DNA repair. It seems to be involved in an RecBC-independent recombinational process of DNA repair. It may act with RecF and RecO. The polypeptide is Recombination protein RecR (Acidothermus cellulolyticus (strain ATCC 43068 / DSM 8971 / 11B)).